The primary structure comprises 345 residues: Ferrochelatase (345 aa).

The Fe cation site is built by histidine 215 and glutamate 296.

The protein belongs to the ferrochelatase family.

Its subcellular location is the cytoplasm. The enzyme catalyses heme b + 2 H(+) = protoporphyrin IX + Fe(2+). Its pathway is porphyrin-containing compound metabolism; protoheme biosynthesis; protoheme from protoporphyrin-IX: step 1/1. Functionally, catalyzes the ferrous insertion into protoporphyrin IX. Essential for normal nodule development. The polypeptide is Ferrochelatase (Bradyrhizobium diazoefficiens (strain JCM 10833 / BCRC 13528 / IAM 13628 / NBRC 14792 / USDA 110)).